The primary structure comprises 281 residues: MSLASLETTINGAFDARETVTAATKGEVREAVDHALDLLDKGEVRVAERAADGKWTVNQWLKKAVLLSFRLNDMSVIPGGPGKAVWWDKVPSKFEGWDENRFRDAGFRAVPGAIVRRSAYIAKNAVLMPSFVNLGAYVDESTMVDTWCTVGSCAQIGKRVHISGGAGIGGVLEPLQAGPVIIEDDCFIGARSEVAEGVIVRKGAVLSMGVFLGASTKIVDRETGEIFMGEVPEYAVVVPGALPGKPLKNGQPGPSTACAVIVKRVDERTRSKTGINELLRD.

The substrate site is built by arginine 108 and aspartate 145.

It belongs to the transferase hexapeptide repeat family. As to quaternary structure, homotrimer.

It localises to the cytoplasm. It catalyses the reaction (S)-2,3,4,5-tetrahydrodipicolinate + succinyl-CoA + H2O = (S)-2-succinylamino-6-oxoheptanedioate + CoA. It functions in the pathway amino-acid biosynthesis; L-lysine biosynthesis via DAP pathway; LL-2,6-diaminopimelate from (S)-tetrahydrodipicolinate (succinylase route): step 1/3. The chain is 2,3,4,5-tetrahydropyridine-2,6-dicarboxylate N-succinyltransferase from Nitrobacter hamburgensis (strain DSM 10229 / NCIMB 13809 / X14).